A 119-amino-acid chain; its full sequence is Beta-2-microglobulin (119 aa).

The first 21 residues, 1–21 (MGKAAAVVLVTLVALLGLAQA), serve as a signal peptide directing secretion. One can recognise an Ig-like C1-type domain in the interval 25-113 (PKVQVYSRFP…HETLKEPQVY (89 aa)). Cys-45 and Cys-100 are disulfide-bonded.

The protein belongs to the beta-2-microglobulin family. As to quaternary structure, heterodimer of an alpha chain and a beta chain. Beta-2-microglobulin is the beta-chain of major histocompatibility complex class I molecules.

It localises to the secreted. Its function is as follows. Component of the class I major histocompatibility complex (MHC). Involved in the presentation of peptide antigens to the immune system. This chain is Beta-2-microglobulin (B2M), found in Gallus gallus (Chicken).